A 76-amino-acid polypeptide reads, in one-letter code: uncharacterized protein (76 aa).

It is found in the plastid. This is an uncharacterized protein from Euglena longa (Euglenophycean alga).